The chain runs to 242 residues: Protein MHF1 homolog (242 aa).

The segment at 208 to 242 (LKAKEPQSERKRKKGSAKKEDKASSSNAVRITTDL) is disordered. Residues 231–242 (SSSNAVRITTDL) show a composition bias toward polar residues.

Belongs to the TAF9 family. CENP-S/MHF1 subfamily.

It localises to the nucleus. Its function is as follows. Involved in the promotion of spontaneous somatic homologous recombination (HR) events, which is opposite to the function of FANCM in ordered HR. Only FANCM is essential for replicative repair in the absence of the endonuclease MUS81. Acts in the same pathway as FANCM to restrain class II meiotic crossing over (CO), and acts with FANCM during meiosis to repair interstrand cross-links (ICLs). This common pathway between MHF1 and FANCM is in parallel to the pathway that involves the RECQ4A helicase. The sequence is that of Protein MHF1 homolog from Arabidopsis thaliana (Mouse-ear cress).